Reading from the N-terminus, the 300-residue chain is UPF0761 membrane protein Patl_3954 (300 aa).

6 helical membrane passes run 46-66 (LLSL…FPAF), 103-123 (MGAI…SNID), 138-158 (IIFT…LIGL), 184-204 (MLKI…YMIV), 214-234 (ALVG…GFSF), and 248-268 (AMAV…VVLL).

The protein belongs to the UPF0761 family.

Its subcellular location is the cell inner membrane. This chain is UPF0761 membrane protein Patl_3954, found in Pseudoalteromonas atlantica (strain T6c / ATCC BAA-1087).